A 593-amino-acid chain; its full sequence is Cryptochrome-2 (593 aa).

A Photolyase/cryptochrome alpha/beta domain is found at 22–151 (ASSVHWFRKG…EVVTENSHTL (130 aa)). A Glycyl lysine isopeptide (Lys-Gly) (interchain with G-Cter in ubiquitin) cross-link involves residue K30. At S90 the chain carries Phosphoserine. Residues K126 and K242 each participate in a glycyl lysine isopeptide (Lys-Gly) (interchain with G-Cter in ubiquitin) cross-link. A Phosphoserine; by MAPK modification is found at S266. S271 is an FAD binding site. S299 is subject to Phosphoserine. Q308 provides a ligand contact to FAD. K348 is covalently cross-linked (Glycyl lysine isopeptide (Lys-Gly) (interchain with G-Cter in ubiquitin)). FAD is bound by residues H374 and 406–408 (DAD). Positions 390–489 (WVSWESGVRV…IIGVDYPRPI (100 aa)) are required for inhibition of CLOCK-BMAL1-mediated transcription. Residues K475 and K504 each participate in a glycyl lysine isopeptide (Lys-Gly) (interchain with G-Cter in ubiquitin) cross-link. A disordered region spans residues 532 to 593 (PVAEPSSSQA…PTPELPSKDA (62 aa)). Residues 537-548 (SSSQAGSMSSAG) are compositionally biased toward low complexity. At S554 the chain carries Phosphoserine; by GSK3-beta. A Phosphoserine; by DYRK1A and MAPK modification is found at S558.

This sequence belongs to the DNA photolyase class-1 family. As to quaternary structure, component of the circadian core oscillator, which includes the CRY proteins, CLOCK or NPAS2, BMAL1 or BMAL2, CSNK1D and/or CSNK1E, TIMELESS, and the PER proteins. Interacts with TIMELESS. Interacts directly with PER1, PER2 and PER3; interaction with PER2 inhibits its ubiquitination and vice versa. Interacts with CLOCK-BMAL1. Interacts with CLOCK. Interacts with BMAL1. Interacts with NFIL3. Interacts with FBXL3. Interacts with FBXL21. FBXL3, PER2 and the cofactor FAD compete for overlapping binding sites. FBXL3 cannot bind CRY2 that interacts already with PER2 or that contains bound FAD. Interacts with PPP5C (via TPR repeats); the interaction down-regulates the PPP5C phosphatase activity on CSNK1E. Interacts with nuclear receptors AR and NR3C1/GR; the interaction is ligand dependent. Interacts with PRKDC and CIART. Interacts with ISCA1 (in vitro). Interacts with DDB1, USP7 and TARDBP. Interacts with HNF4A. Interacts with PPARA. Interacts with PPARD (via domain NR LBD) and NR1I2 (via domain NR LBD) in a ligand-dependent manner. Interacts with PPARG, NR1I3 and VDR in a ligand-dependent manner. It depends on FAD as a cofactor. Requires (6R)-5,10-methylene-5,6,7,8-tetrahydrofolate as cofactor. Post-translationally, phosphorylation on Ser-266 by MAPK is important for the inhibition of CLOCK-BMAL1-mediated transcriptional activity. Phosphorylation by CSKNE requires interaction with PER1 or PER2. Phosphorylated in a circadian manner at Ser-554 and Ser-558 in the suprachiasmatic nucleus (SCN) and liver. Phosphorylation at Ser-558 by DYRK1A promotes subsequent phosphorylation at Ser-554 by GSK3-beta: the two-step phosphorylation at the neighboring Ser residues leads to its proteasomal degradation. In terms of processing, ubiquitinated by the SCF(FBXL3) and SCF(FBXL21) complexes, regulating the balance between degradation and stabilization. The SCF(FBXL3) complex is mainly nuclear and mediates ubiquitination and subsequent degradation of CRY2. In contrast, cytoplasmic SCF(FBXL21) complex-mediated ubiquitination leads to stabilize CRY2 and counteract the activity of the SCF(FBXL3) complex. The SCF(FBXL3) and SCF(FBXL21) complexes probably mediate ubiquitination at different Lys residues. The SCF(FBXL3) complex recognizes and binds CRY2 phosphorylated at Ser-554 and Ser-558. Ubiquitination may be inhibited by PER2. Deubiquitinated by USP7. As to expression, expressed in all tissues examined including fetal brain, fibroblasts, heart, brain, placenta, lung, liver, skeletal muscle, kidney, pancreas, spleen, thymus, prostate, testis, ovary, small intestine, colon and leukocytes. Highest levels in heart and skeletal muscle.

Its subcellular location is the cytoplasm. The protein resides in the nucleus. Its activity is regulated as follows. KL001 (N-[3-(9H-carbazol-9-yl)-2-hydroxypropyl]-N-(2-furanylmethyl)-methanesulfonamide) binds to CRY1 and stabilizes it by inhibiting FBXL3- and ubiquitin-dependent degradation of CRY1 resulting in lengthening of the circadian periods. Functionally, transcriptional repressor which forms a core component of the circadian clock. The circadian clock, an internal time-keeping system, regulates various physiological processes through the generation of approximately 24 hour circadian rhythms in gene expression, which are translated into rhythms in metabolism and behavior. It is derived from the Latin roots 'circa' (about) and 'diem' (day) and acts as an important regulator of a wide array of physiological functions including metabolism, sleep, body temperature, blood pressure, endocrine, immune, cardiovascular, and renal function. Consists of two major components: the central clock, residing in the suprachiasmatic nucleus (SCN) of the brain, and the peripheral clocks that are present in nearly every tissue and organ system. Both the central and peripheral clocks can be reset by environmental cues, also known as Zeitgebers (German for 'timegivers'). The predominant Zeitgeber for the central clock is light, which is sensed by retina and signals directly to the SCN. The central clock entrains the peripheral clocks through neuronal and hormonal signals, body temperature and feeding-related cues, aligning all clocks with the external light/dark cycle. Circadian rhythms allow an organism to achieve temporal homeostasis with its environment at the molecular level by regulating gene expression to create a peak of protein expression once every 24 hours to control when a particular physiological process is most active with respect to the solar day. Transcription and translation of core clock components (CLOCK, NPAS2, BMAL1, BMAL2, PER1, PER2, PER3, CRY1 and CRY2) plays a critical role in rhythm generation, whereas delays imposed by post-translational modifications (PTMs) are important for determining the period (tau) of the rhythms (tau refers to the period of a rhythm and is the length, in time, of one complete cycle). A diurnal rhythm is synchronized with the day/night cycle, while the ultradian and infradian rhythms have a period shorter and longer than 24 hours, respectively. Disruptions in the circadian rhythms contribute to the pathology of cardiovascular diseases, cancer, metabolic syndromes and aging. A transcription/translation feedback loop (TTFL) forms the core of the molecular circadian clock mechanism. Transcription factors, CLOCK or NPAS2 and BMAL1 or BMAL2, form the positive limb of the feedback loop, act in the form of a heterodimer and activate the transcription of core clock genes and clock-controlled genes (involved in key metabolic processes), harboring E-box elements (5'-CACGTG-3') within their promoters. The core clock genes: PER1/2/3 and CRY1/2 which are transcriptional repressors form the negative limb of the feedback loop and interact with the CLOCK|NPAS2-BMAL1|BMAL2 heterodimer inhibiting its activity and thereby negatively regulating their own expression. This heterodimer also activates nuclear receptors NR1D1/2 and RORA/B/G, which form a second feedback loop and which activate and repress BMAL1 transcription, respectively. CRY1 and CRY2 have redundant functions but also differential and selective contributions at least in defining the pace of the SCN circadian clock and its circadian transcriptional outputs. Less potent transcriptional repressor in cerebellum and liver than CRY1, though less effective in lengthening the period of the SCN oscillator. Seems to play a critical role in tuning SCN circadian period by opposing the action of CRY1. With CRY1, dispensable for circadian rhythm generation but necessary for the development of intercellular networks for rhythm synchrony. May mediate circadian regulation of cAMP signaling and gluconeogenesis by blocking glucagon-mediated increases in intracellular cAMP concentrations and in CREB1 phosphorylation. Besides its role in the maintenance of the circadian clock, is also involved in the regulation of other processes. Plays a key role in glucose and lipid metabolism modulation, in part, through the transcriptional regulation of genes involved in these pathways, such as LEP or ACSL4. Represses glucocorticoid receptor NR3C1/GR-induced transcriptional activity by binding to glucocorticoid response elements (GREs). Represses the CLOCK-BMAL1 induced transcription of BHLHE40/DEC1. Represses the CLOCK-BMAL1 induced transcription of NAMPT. Represses PPARD and its target genes in the skeletal muscle and limits exercise capacity. Represses the transcriptional activity of NR1I2. The sequence is that of Cryptochrome-2 (CRY2) from Homo sapiens (Human).